A 940-amino-acid polypeptide reads, in one-letter code: Translation initiation factor IF-2 (940 aa).

Disordered stretches follow at residues 48 to 264 and 278 to 351; these read ESFG…VESK and QVAE…TERK. Composition is skewed to basic and acidic residues over residues 65 to 95, 112 to 125, 155 to 206, 232 to 258, and 292 to 301; these read SKPE…KEEV, FKAE…EQAA, NNER…REAA, RTSE…KFEE, and ARPDKKRDFN. Residues 314–332 show a composition bias toward low complexity; that stretch reads NRNSQNQVRNQRTSNWNNN. A tr-type G domain is found at 442–609; it reads ERPPVVTIMG…TVLLVAEIQE (168 aa). Residues 451–458 are G1; that stretch reads GHVDHGKT. Position 451–458 (451–458) interacts with GTP; sequence GHVDHGKT. The segment at 476–480 is G2; the sequence is GITQH. The segment at 497–500 is G3; sequence DTPG. GTP is bound by residues 497-501 and 551-554; these read DTPGH and NKID. The G4 stretch occupies residues 551-554; that stretch reads NKID. Positions 587 to 589 are G5; sequence SAK.

Belongs to the TRAFAC class translation factor GTPase superfamily. Classic translation factor GTPase family. IF-2 subfamily.

It localises to the cytoplasm. Its function is as follows. One of the essential components for the initiation of protein synthesis. Protects formylmethionyl-tRNA from spontaneous hydrolysis and promotes its binding to the 30S ribosomal subunits. Also involved in the hydrolysis of GTP during the formation of the 70S ribosomal complex. The protein is Translation initiation factor IF-2 of Streptococcus suis (strain 98HAH33).